The chain runs to 417 residues: 3-isopropylmalate dehydratase large subunit 2 (417 aa).

Residues cysteine 298, cysteine 358, and cysteine 361 each contribute to the [4Fe-4S] cluster site.

This sequence belongs to the aconitase/IPM isomerase family. LeuC type 2 subfamily. In terms of assembly, heterodimer of LeuC and LeuD. Requires [4Fe-4S] cluster as cofactor.

The enzyme catalyses (2R,3S)-3-isopropylmalate = (2S)-2-isopropylmalate. Its pathway is amino-acid biosynthesis; L-leucine biosynthesis; L-leucine from 3-methyl-2-oxobutanoate: step 2/4. In terms of biological role, catalyzes the isomerization between 2-isopropylmalate and 3-isopropylmalate, via the formation of 2-isopropylmaleate. The sequence is that of 3-isopropylmalate dehydratase large subunit 2 from Thermotoga maritima (strain ATCC 43589 / DSM 3109 / JCM 10099 / NBRC 100826 / MSB8).